The following is a 170-amino-acid chain: Phosphopantetheine adenylyltransferase (170 aa).

Thr-9 provides a ligand contact to substrate. Residues 9–10 (TF) and His-17 each bind ATP. 3 residues coordinate substrate: Lys-41, Leu-73, and Arg-87. ATP contacts are provided by residues 88 to 90 (GLR), Glu-98, and 123 to 129 (YQFISGT).

Belongs to the bacterial CoaD family. As to quaternary structure, homohexamer. Mg(2+) serves as cofactor.

The protein localises to the cytoplasm. The enzyme catalyses (R)-4'-phosphopantetheine + ATP + H(+) = 3'-dephospho-CoA + diphosphate. It participates in cofactor biosynthesis; coenzyme A biosynthesis; CoA from (R)-pantothenate: step 4/5. Reversibly transfers an adenylyl group from ATP to 4'-phosphopantetheine, yielding dephospho-CoA (dPCoA) and pyrophosphate. This chain is Phosphopantetheine adenylyltransferase, found in Bordetella petrii (strain ATCC BAA-461 / DSM 12804 / CCUG 43448).